Consider the following 345-residue polypeptide: Biotin synthase (345 aa).

The Radical SAM core domain maps to 66-291; the sequence is PEVEIEGIIS…RTILRFAGGR (226 aa). C81, C85, and C88 together coordinate [4Fe-4S] cluster. [2Fe-2S] cluster is bound by residues C124, C157, C216, and R286.

It belongs to the radical SAM superfamily. Biotin synthase family. In terms of assembly, homodimer. The cofactor is [4Fe-4S] cluster. It depends on [2Fe-2S] cluster as a cofactor.

It carries out the reaction (4R,5S)-dethiobiotin + (sulfur carrier)-SH + 2 reduced [2Fe-2S]-[ferredoxin] + 2 S-adenosyl-L-methionine = (sulfur carrier)-H + biotin + 2 5'-deoxyadenosine + 2 L-methionine + 2 oxidized [2Fe-2S]-[ferredoxin]. It participates in cofactor biosynthesis; biotin biosynthesis; biotin from 7,8-diaminononanoate: step 2/2. In terms of biological role, catalyzes the conversion of dethiobiotin (DTB) to biotin by the insertion of a sulfur atom into dethiobiotin via a radical-based mechanism. The protein is Biotin synthase of Mycobacterium leprae (strain Br4923).